The following is an 86-amino-acid chain: Small ribosomal subunit protein uS17 (86 aa).

It belongs to the universal ribosomal protein uS17 family. Part of the 30S ribosomal subunit.

One of the primary rRNA binding proteins, it binds specifically to the 5'-end of 16S ribosomal RNA. The protein is Small ribosomal subunit protein uS17 of Caldicellulosiruptor saccharolyticus (strain ATCC 43494 / DSM 8903 / Tp8T 6331).